Consider the following 216-residue polypeptide: Glycerol-3-phosphate acyltransferase (216 aa).

The next 5 helical transmembrane spans lie at 4–24, 71–91, 113–133, 144–164, and 165–185; these read TIIG…LWIG, LPFF…LAVI, VVLG…ASIL, VLSA…GFIL, and PSYD…IILR.

This sequence belongs to the PlsY family. As to quaternary structure, probably interacts with PlsX.

Its subcellular location is the cell membrane. It catalyses the reaction an acyl phosphate + sn-glycerol 3-phosphate = a 1-acyl-sn-glycero-3-phosphate + phosphate. Its pathway is lipid metabolism; phospholipid metabolism. Its function is as follows. Catalyzes the transfer of an acyl group from acyl-phosphate (acyl-PO(4)) to glycerol-3-phosphate (G3P) to form lysophosphatidic acid (LPA). This enzyme utilizes acyl-phosphate as fatty acyl donor, but not acyl-CoA or acyl-ACP. This chain is Glycerol-3-phosphate acyltransferase, found in Streptococcus sanguinis (strain SK36).